Here is a 108-residue protein sequence, read N- to C-terminus: Kanamycin resistance protein (108 aa).

Residues 1-99 (SRTLLLERGR…PAVYMVQTRQ (99 aa)) form the N-acetyltransferase domain.

This is Kanamycin resistance protein from Rhizobium radiobacter (Agrobacterium tumefaciens).